The following is a 256-amino-acid chain: uncharacterized protein (256 aa).

The first 24 residues, 1–24 (MIKRVNKLVLGISLLFLVISITAG), serve as a signal peptide directing secretion. A lipid anchor (N-palmitoyl cysteine) is attached at Cys25. Cys25 carries S-diacylglycerol cysteine lipidation.

Belongs to the staphylococcal tandem lipoprotein family.

The protein localises to the cell membrane. This is an uncharacterized protein from Staphylococcus aureus (strain NCTC 8325 / PS 47).